The sequence spans 57 residues: uncharacterized protein (57 aa).

This is an uncharacterized protein from Halorubrum sp. PV6 (HRPV-1).